A 339-amino-acid chain; its full sequence is Dehydrogenase/reductase SDR family member 7 (339 aa).

Residues 1–28 form the signal peptide; that stretch reads MNWELLLWLLVLCALLLLLVQLLRFLRA. Positions 60 and 62 each coordinate NAD(+). Residue S190 coordinates substrate. NAD(+)-binding residues include Y203, K207, and S239. Y203 acts as the Proton acceptor in catalysis.

Belongs to the short-chain dehydrogenases/reductases (SDR) family. In terms of tissue distribution, found predominantly in the adrenal glands, liver, thyroid, prostate, small intestine, colon, stomach, kidney and brain. Lower levels observed in skeletal muscle, the lung and the spleen.

Its subcellular location is the endoplasmic reticulum membrane. It catalyses the reaction all-trans-retinol + NADP(+) = all-trans-retinal + NADPH + H(+). The enzyme catalyses 5alpha-androstane-3alpha,17beta-diol + NADP(+) = 17beta-hydroxy-5alpha-androstan-3-one + NADPH + H(+). In terms of biological role, NADPH-dependent oxidoreductase which catalyzes the reduction of a variety of compounds bearing carbonyl groups including steroids, retinoids and xenobiotics. Catalyzes the reduction/inactivation of 5alpha-dihydrotestosterone to 3alpha-androstanediol, with a possible role in the modulation of androgen receptor function. Involved in the reduction of all-trans-retinal to all-trans-retinol. Converts cortisone to 20beta-dihydrocortisone in vitro, although the physiological relevance of this activity is questionable. Reduces exogenous compounds such as quinones (1,2-naphtoquinone, 9,10-phenantrenequinone and benzoquinone) and other xenobiotics (alpha-diketones) in vitro, suggesting a role in the biotransformation of xenobiotics with carbonyl group. A dehydrogenase activity has not been detected so far. May play a role as tumor suppressor. The protein is Dehydrogenase/reductase SDR family member 7 of Homo sapiens (Human).